Here is a 162-residue protein sequence, read N- to C-terminus: Peptidyl-prolyl cis-trans isomerase (162 aa).

At S2 the chain carries N-acetylserine. The PPIase cyclophilin-type domain occupies 5 to 161 (YFDVEADGQP…ARIVVAKSGE (157 aa)). Residues K29 and K42 each participate in a glycyl lysine isopeptide (Lys-Gly) (interchain with G-Cter in ubiquitin) cross-link. Residue T71 is modified to Phosphothreonine. Glycyl lysine isopeptide (Lys-Gly) (interchain with G-Cter in ubiquitin) cross-links involve residues K123 and K139. Phosphoserine is present on residues S142 and S145. Residues K151 and K158 each participate in a glycyl lysine isopeptide (Lys-Gly) (interchain with G-Cter in ubiquitin) cross-link.

It belongs to the cyclophilin-type PPIase family. PPIase A subfamily. As to quaternary structure, interacts with a complex composed of SIN3 and RPD3. Identified in the Set3C complex with HOS2, HST1, SNT1, SIF2, HOS4/YIL112W and SET3.

The protein resides in the cytoplasm. Its subcellular location is the nucleus. It is found in the mitochondrion intermembrane space. It catalyses the reaction [protein]-peptidylproline (omega=180) = [protein]-peptidylproline (omega=0). Its activity is regulated as follows. Binds cyclosporin A (CsA). CsA mediates some of its effects via an inhibitory action on PPIase. In terms of biological role, PPIases accelerate the folding of proteins. It catalyzes the cis-trans isomerization of proline imidic peptide bonds in oligopeptides. Involved in histone deacetylase complexes, suggesting a function in chromatin. Imports fructose-1,6-bisphosphatase (FBPase) into the intermediate vacuole import and degradation (Vid) vesicles. Regulates the meiotic gene program via the Set3C histone deacetylase complex to promote efficient sporulation, and the prolyl-isomerase activity is required for this function. In Saccharomyces cerevisiae (strain ATCC 204508 / S288c) (Baker's yeast), this protein is Peptidyl-prolyl cis-trans isomerase (CPR1).